Consider the following 234-residue polypeptide: Probable chemoreceptor glutamine deamidase CheD 1 (234 aa).

Residues 183-234 (AREAAGPRGERAARARPRVELFGTPAPKAQATPRIELFGTRATQPATRKQEA) form a disordered region. Residues 190–201 (RGERAARARPRV) show a composition bias toward basic and acidic residues. The segment covering 223–234 (RATQPATRKQEA) has biased composition (polar residues).

This sequence belongs to the CheD family.

The enzyme catalyses L-glutaminyl-[protein] + H2O = L-glutamyl-[protein] + NH4(+). In terms of biological role, probably deamidates glutamine residues to glutamate on methyl-accepting chemotaxis receptors (MCPs), playing an important role in chemotaxis. In Burkholderia thailandensis (strain ATCC 700388 / DSM 13276 / CCUG 48851 / CIP 106301 / E264), this protein is Probable chemoreceptor glutamine deamidase CheD 1.